The following is a 473-amino-acid chain: JmjC domain-containing protein 4 (473 aa).

Positions 140–433 constitute a JmjC domain; that stretch reads PTDGLLTDFS…DFDHPYLDRN (294 aa). The segment at 452–473 is disordered; that stretch reads TNKKNEKRPAEDDSPSQKKTCQ.

It is found in the nucleus. Functionally, has a role in meiosis. This chain is JmjC domain-containing protein 4 (jmj4), found in Schizosaccharomyces pombe (strain 972 / ATCC 24843) (Fission yeast).